The following is a 710-amino-acid chain: Polyribonucleotide nucleotidyltransferase (710 aa).

Positions 501 and 507 each coordinate Mg(2+). The region spanning 568–628 (PKVQMFQIKP…ETVKQAILFI (61 aa)) is the KH domain. The 73-residue stretch at 638 to 710 (NSIYHAHISR…RIDFVLISKK (73 aa)) folds into the S1 motif domain.

This sequence belongs to the polyribonucleotide nucleotidyltransferase family. It depends on Mg(2+) as a cofactor.

It is found in the cytoplasm. It catalyses the reaction RNA(n+1) + phosphate = RNA(n) + a ribonucleoside 5'-diphosphate. Its function is as follows. Involved in mRNA degradation. Catalyzes the phosphorolysis of single-stranded polyribonucleotides processively in the 3'- to 5'-direction. This chain is Polyribonucleotide nucleotidyltransferase, found in Phytoplasma australiense.